A 254-amino-acid polypeptide reads, in one-letter code: tRNA (guanine-N(1)-)-methyltransferase (254 aa).

S-adenosyl-L-methionine-binding positions include G113 and 133-138 (LGDFVL).

It belongs to the RNA methyltransferase TrmD family. In terms of assembly, homodimer.

The protein resides in the cytoplasm. The catalysed reaction is guanosine(37) in tRNA + S-adenosyl-L-methionine = N(1)-methylguanosine(37) in tRNA + S-adenosyl-L-homocysteine + H(+). Its function is as follows. Specifically methylates guanosine-37 in various tRNAs. This is tRNA (guanine-N(1)-)-methyltransferase from Herpetosiphon aurantiacus (strain ATCC 23779 / DSM 785 / 114-95).